Consider the following 382-residue polypeptide: Lipid-A-disaccharide synthase (382 aa).

Belongs to the LpxB family.

The catalysed reaction is 2-N,3-O-bis[(3R)-3-hydroxytetradecanoyl]-alpha-D-glucosaminyl 1-phosphate + UDP-2-N,3-O-bis[(3R)-3-hydroxytetradecanoyl]-alpha-D-glucosamine = lipid A disaccharide (E. coli) + UDP + H(+). It carries out the reaction a lipid X + a UDP-2-N,3-O-bis[(3R)-3-hydroxyacyl]-alpha-D-glucosamine = a lipid A disaccharide + UDP + H(+). It participates in glycolipid biosynthesis; lipid IV(A) biosynthesis; lipid IV(A) from (3R)-3-hydroxytetradecanoyl-[acyl-carrier-protein] and UDP-N-acetyl-alpha-D-glucosamine: step 5/6. In terms of biological role, condensation of UDP-2,3-diacylglucosamine and 2,3-diacylglucosamine-1-phosphate to form lipid A disaccharide, a precursor of lipid A, a phosphorylated glycolipid that anchors the lipopolysaccharide to the outer membrane of the cell. This Salmonella paratyphi A (strain AKU_12601) protein is Lipid-A-disaccharide synthase.